The primary structure comprises 138 residues: Acidic phospholipase A2 daboiatoxin A chain (138 aa).

Residues 1-16 form the signal peptide; sequence MRTLWIMAVCLIGVEG. 7 disulfides stabilise this stretch: cysteine 42–cysteine 131, cysteine 44–cysteine 60, cysteine 59–cysteine 111, cysteine 65–cysteine 138, cysteine 66–cysteine 104, cysteine 73–cysteine 97, and cysteine 91–cysteine 102. Positions 43, 45, and 47 each coordinate Ca(2+). Histidine 63 is a catalytic residue. Residue aspartate 64 participates in Ca(2+) binding. Residue aspartate 105 is part of the active site.

The protein belongs to the phospholipase A2 family. Group II subfamily. D49 sub-subfamily. As to quaternary structure, heterodimer of A and B chain; non-covalently linked. The acidic protein (B chain) has phospholipase A2 activity and the A chain weakly inhibits the B chain enzymatic activity but potentiates its lethal potency. The cofactor is Ca(2+). In terms of tissue distribution, expressed by the venom gland.

It localises to the secreted. It catalyses the reaction a 1,2-diacyl-sn-glycero-3-phosphocholine + H2O = a 1-acyl-sn-glycero-3-phosphocholine + a fatty acid + H(+). In terms of biological role, heterodimer (A and B chains): phospholipase A2 that acts as a presynaptic neurotoxin and shows a PLA2 activity of 1377 umol/min/mg. In vivo, induces edema and produces neurotoxic symptoms in mice. Also exhibits indirect hemolysis, a strong myonecrotic activity and cytotoxicity. PLA2 catalyzes the calcium-dependent hydrolysis of the 2-acyl groups in 3-sn-phosphoglycerides. Its function is as follows. Monomer: Snake venom phospholipase A2 (PLA2) that shows a PLA2 activity of 578 umol/min/mg. The sequence is that of Acidic phospholipase A2 daboiatoxin A chain from Daboia siamensis (Eastern Russel's viper).